The chain runs to 900 residues: Exosome complex component 10 homolog (900 aa).

Disordered stretches follow at residues 1-31 (MPRT…SEDV) and 147-174 (TSIE…TGTP). A compositionally biased stretch (basic and acidic residues) spans 8–28 (VHQEAKEESAQADQPPKKSAS). Positions 273 to 438 (VVDTVEKLKQ…YVYGRMTNDL (166 aa)) constitute a 3'-5' exonuclease domain. Positions 296, 298, 354, and 423 each coordinate Mg(2+). The HRDC domain occupies 485-565 (DNRQLYALRG…LKARDQPLVK (81 aa)). The tract at residues 731–900 (EQLKRKHPQA…FSNVRKEGKK (170 aa)) is disordered. Basic residues predominate over residues 809–826 (RKQKKNQFQRGFKAKNRG). Over residues 878–887 (NNRNNKQFNK) the composition is skewed to low complexity.

This sequence belongs to the exosome component 10/RRP6 family. Component of the RNA exosome complex. Interacts with spn-A/Rad51; the interaction is required for the recruitment of spn-A to the DNA-damage response foci. Interacts with Su(var)3-9, a heterochromatin factor; the interaction promotes association of Rrp6 with a subset of genomic loci. Interacts with Su(var)205, a heterochromatin factor. Interacts with HDAC1, a heterochromatin factor. It depends on Mg(2+) as a cofactor. Salivary gland (at protein level).

Its subcellular location is the nucleus. The protein resides in the chromosome. The protein localises to the cytoplasm. It localises to the cell cortex. It is found in the cytoskeleton. Its subcellular location is the microtubule organizing center. The protein resides in the centrosome. The protein localises to the spindle. It localises to the midbody. Its function is as follows. Catalytic component of the RNA exosome complex which has 3'-&gt;5' exoribonuclease activity and participates in a multitude of cellular RNA processing and degradation events. Degrades a large variety of non-coding RNAs that are processed by the exosome, such as pre-rRNAs and some small nucleolar RNAs (snoRNAs). Degrades transcripts derived from different types of heterochromatic repeats, such as subtelomeric minisatellites and simple gagaa repeats. Degrades transcripts derived from transposons and transposon fragments. Degrades chromatin-associated transcripts and contributes to the compaction of heterochromatin. Required for the efficient repair of DNA double-strand breaks via homologous recombination after irradiation. Required for cell proliferation and error-free mitosis. This Drosophila melanogaster (Fruit fly) protein is Exosome complex component 10 homolog.